Here is a 373-residue protein sequence, read N- to C-terminus: tRNA-specific 2-thiouridylase MnmA (373 aa).

ATP is bound by residues 12 to 19 and Met-38; that span reads GMSGGVDS. An interaction with target base in tRNA region spans residues 98–100; it reads NPD. Cys-103 functions as the Nucleophile in the catalytic mechanism. An intrachain disulfide couples Cys-103 to Cys-200. Gly-127 provides a ligand contact to ATP. The segment at 150–152 is interaction with tRNA; sequence KDQ. The Cysteine persulfide intermediate role is filled by Cys-200. Residues 312–313 are interaction with tRNA; sequence RY.

Belongs to the MnmA/TRMU family.

The protein localises to the cytoplasm. The enzyme catalyses S-sulfanyl-L-cysteinyl-[protein] + uridine(34) in tRNA + AH2 + ATP = 2-thiouridine(34) in tRNA + L-cysteinyl-[protein] + A + AMP + diphosphate + H(+). In terms of biological role, catalyzes the 2-thiolation of uridine at the wobble position (U34) of tRNA, leading to the formation of s(2)U34. This Streptococcus pneumoniae (strain CGSP14) protein is tRNA-specific 2-thiouridylase MnmA.